Reading from the N-terminus, the 371-residue chain is Protein cbbX homolog, chloroplastic (371 aa).

The N-terminal 54 residues, 1-54, are a transit peptide targeting the chloroplast; it reads MIAFISNYITFKTNRTYKNNICQLHCQSLNDNDIEARKIKEEAERRKQQAERNR. 137–144 serves as a coordination point for ATP; that stretch reads GAPGTGKT.

The protein belongs to the CbxX/CfxQ family.

The protein resides in the plastid. Its subcellular location is the chloroplast. Its function is as follows. Seems to be necessary for the expression of RuBisCO. The polypeptide is Protein cbbX homolog, chloroplastic (cbbX) (Guillardia theta (Cryptophyte)).